A 55-amino-acid chain; its full sequence is RRLHGQAINRPGSCPRVMIYCPARHPPNKCTSDYDCPKPQKCCPGYCGKQCYQPE.

The WAP domain occupies 7–55; the sequence is AINRPGSCPRVMIYCPARHPPNKCTSDYDCPKPQKCCPGYCGKQCYQPE.

Glycosylated.

Functionally, inhibits calcium transport into spermatozoa. The protein is Caltrin-like protein 2 of Cavia porcellus (Guinea pig).